We begin with the raw amino-acid sequence, 150 residues long: Large-conductance mechanosensitive channel (150 aa).

2 helical membrane-spanning segments follow: residues 19 to 39 (VGII…SDVL) and 85 to 105 (GIFL…FMLI).

The protein belongs to the MscL family. As to quaternary structure, homopentamer.

It is found in the cell inner membrane. Functionally, channel that opens in response to stretch forces in the membrane lipid bilayer. May participate in the regulation of osmotic pressure changes within the cell. This Chlorobium limicola (strain DSM 245 / NBRC 103803 / 6330) protein is Large-conductance mechanosensitive channel.